The following is a 174-amino-acid chain: Adenine phosphoribosyltransferase (174 aa).

The protein belongs to the purine/pyrimidine phosphoribosyltransferase family. Homodimer.

Its subcellular location is the cytoplasm. It carries out the reaction AMP + diphosphate = 5-phospho-alpha-D-ribose 1-diphosphate + adenine. The protein operates within purine metabolism; AMP biosynthesis via salvage pathway; AMP from adenine: step 1/1. Functionally, catalyzes a salvage reaction resulting in the formation of AMP, that is energically less costly than de novo synthesis. This Photobacterium profundum (strain SS9) protein is Adenine phosphoribosyltransferase.